The sequence spans 380 residues: Pregnancy-associated glycoprotein 4 (380 aa).

The signal sequence occupies residues 1 to 15; the sequence is MKWLVLLGLVAFSEC. The propeptide at 16 to 53 is activation peptide; it reads IFKIPLRRVKTMRKTLSGKNMLNDVLKEHPYRLPQISF. Residues 71 to 377 form the Peptidase A1 domain; that stretch reads YVGNITIGTP…DRGNDRIGLA (307 aa). Asparagine 74 carries N-linked (GlcNAc...) asparagine glycosylation. Residue aspartate 89 is part of the active site. A disulfide bond links cysteine 102 and cysteine 107. Asparagine 125 is a glycosylation site (N-linked (GlcNAc...) asparagine). A disulfide bridge links cysteine 261 with cysteine 265. The active site involves aspartate 270. Cysteine 303 and cysteine 337 form a disulfide bridge.

The protein belongs to the peptidase A1 family. As to expression, trophoblast and placental tissue. Produced specifically in the invasive binucleate cells of the placenta.

Its subcellular location is the secreted. It localises to the extracellular space. This Ovis aries (Sheep) protein is Pregnancy-associated glycoprotein 4.